An 812-amino-acid chain; its full sequence is Eukaryotic translation initiation factor 3 subunit C (812 aa).

A disordered region spans residues 1-110 (MSRFFSSNYE…EESDEEDGKK (110 aa)). Composition is skewed to acidic residues over residues 18-30 (SEEDLLSSSEEDL) and 38-64 (SELDQESDDSFFNESESESEADVDSDD). Phosphoserine is present on residues S98, S99, and S103. The 176-residue stretch at 608-783 (YHQHINLDLI…TIFVVEKGDE (176 aa)) folds into the PCI domain.

The protein belongs to the eIF-3 subunit C family. As to quaternary structure, the eukaryotic translation initiation factor 3 (eIF-3) core complex is composed of TIF32, PRT1, NIP1, TIF34 and TIF35. A subcomplex of TIF32, NIP1 and PRT1 mediates the interaction with eIF-1, TIF5/eIF-5 and HCR1. The factors eIF-1, eIF-2, eIF-3, TIF5/eIF-5 and methionyl-tRNAi form a multifactor complex (MFC) that may bind to the 40S ribosome. TIF32, NIP1 and TIF5/eIF-5 comprise a minimal 40S-ribosome-binding unit. NIP1 interacts with TIF5/eIF-5 and SUI1.

Its subcellular location is the cytoplasm. Functionally, component of the eukaryotic translation initiation factor 3 (eIF-3) complex, which is involved in protein synthesis of a specialized repertoire of mRNAs and, together with other initiation factors, stimulates binding of mRNA and methionyl-tRNAi to the 40S ribosome. The eIF-3 complex specifically targets and initiates translation of a subset of mRNAs involved in cell proliferation. This chain is Eukaryotic translation initiation factor 3 subunit C, found in Saccharomyces cerevisiae (strain ATCC 204508 / S288c) (Baker's yeast).